Here is a 122-residue protein sequence, read N- to C-terminus: Small ribosomal subunit protein uS13c (122 aa).

The disordered stretch occupies residues 102 to 122 (RTRTNARTRRGAKKTVAGKKK).

The protein belongs to the universal ribosomal protein uS13 family. As to quaternary structure, part of the 30S ribosomal subunit.

It is found in the plastid. Its subcellular location is the chloroplast. Its function is as follows. Located at the top of the head of the 30S subunit, it contacts several helices of the 16S rRNA. The sequence is that of Small ribosomal subunit protein uS13c from Guillardia theta (Cryptophyte).